The sequence spans 194 residues: Ion-translocating oxidoreductase complex subunit A (194 aa).

The next 6 helical transmembrane spans lie at 4 to 24 (LVLI…QFLG), 39 to 59 (IGLS…SYLV), 71 to 91 (FLRT…TEMV), 102 to 122 (VLGI…VALL), 131 to 151 (FITA…VLVL), and 172 to 192 (AIGM…AGLI).

The protein belongs to the NqrDE/RnfAE family. As to quaternary structure, the complex is composed of six subunits: RnfA, RnfB, RnfC, RnfD, RnfE and RnfG.

The protein resides in the cell inner membrane. Its function is as follows. Part of a membrane-bound complex that couples electron transfer with translocation of ions across the membrane. The chain is Ion-translocating oxidoreductase complex subunit A from Ectopseudomonas mendocina (strain ymp) (Pseudomonas mendocina).